Consider the following 652-residue polypeptide: MEKRIRELTSLLNQYRQEYYTNDNPSVSDQEYDKLYHELIDLEKEYPEYIQKDSPSQAVGGLILSGFEKYQHPFPLYSLQDAFSKEELEAFDRRVKSEFPKAEYIAELKIDGLSISLSYESGRLVTGATRGDGSVGENITENIKKIKDIPHQLKDDITITVRGEAYMSRSSFQKINLERQENGETEFANPRNAAAGTLRQLDTSIVARRELASFLYQEASPSQAQNQEDVLENLEALGFSVNKKRLISSSMEDIWSFITQVEDERDNLSYDIDGIVIKVNNLAMQEELGFTIKAPRWAIAYKFPAEEKEAEILSVDWTIGRTGVVTPTANLTPIQLAGTTVSRATLHNVDYIAEKDIRIGDTVIVYKAGDIIPAVLRVVDTKRDQQLPMPIPKVCPSCQSDLVHLEAEVALRCINPLCPSLIQRSLEHFASRNAMNIAGLGPAIVEKLFSAQLIHDVADIYQLSLDSLLTLEGIKEKSAQKLLDAIQSSKSNSADKLLFGLGIRHVGAKASRLLLETFGSVENLMKADDQSIAQIDGLGHVIANSIKNYFAKEEAKQLIFELKDKGVNLDYLGKKVDTSAQLFGLTVVLTGKLEEMTRQEAKEKLENMGAKVTGSVSKKTDLVIAGSDAGSKLDKARSLGIDVKDENWLLQL.

NAD(+) contacts are provided by residues 29–33, 78–79, and Glu107; these read DQEYD and SL. Residue Lys109 is the N6-AMP-lysine intermediate of the active site. 4 residues coordinate NAD(+): Arg130, Glu164, Lys278, and Lys302. Residues Cys395, Cys398, Cys413, and Cys418 each coordinate Zn(2+). Residues 577-652 form the BRCT domain; the sequence is DTSAQLFGLT…VKDENWLLQL (76 aa).

Belongs to the NAD-dependent DNA ligase family. LigA subfamily. Mg(2+) serves as cofactor. Requires Mn(2+) as cofactor.

The enzyme catalyses NAD(+) + (deoxyribonucleotide)n-3'-hydroxyl + 5'-phospho-(deoxyribonucleotide)m = (deoxyribonucleotide)n+m + AMP + beta-nicotinamide D-nucleotide.. In terms of biological role, DNA ligase that catalyzes the formation of phosphodiester linkages between 5'-phosphoryl and 3'-hydroxyl groups in double-stranded DNA using NAD as a coenzyme and as the energy source for the reaction. It is essential for DNA replication and repair of damaged DNA. This is DNA ligase from Streptococcus uberis (strain ATCC BAA-854 / 0140J).